A 43-amino-acid chain; its full sequence is uncharacterized protein (43 aa).

This is an uncharacterized protein from Rickettsia prowazekii (strain Madrid E).